Consider the following 218-residue polypeptide: UPF0177 protein YaiF (218 aa).

The next 5 helical transmembrane spans lie at 8-28 (SIII…AVFL), 48-68 (FIIL…KCGF), 81-101 (ILLI…VVQF), 123-143 (ILSS…APIL), and 163-183 (FFLS…DILG).

It belongs to the UPF0177 family.

It localises to the cell membrane. The chain is UPF0177 protein YaiF (yaiF) from Lactococcus lactis subsp. lactis (strain IL1403) (Streptococcus lactis).